The primary structure comprises 124 residues: Histone H2A (124 aa).

Over residues 1–18 (MSGRGKGGKAKGKSKSRS) the composition is skewed to basic residues. Residues 1-23 (MSGRGKGGKAKGKSKSRSSRAGL) are disordered. S2 is modified (N-acetylserine). Residue S2 is modified to Phosphoserine. At Q104 the chain carries N5-methylglutamine.

This sequence belongs to the histone H2A family. In terms of assembly, the nucleosome is a histone octamer containing two molecules each of H2A, H2B, H3 and H4 assembled in one H3-H4 heterotetramer and two H2A-H2B heterodimers. The octamer wraps approximately 147 bp of DNA. In terms of processing, the N-terminal serine is acetylated. That serine is also phosphorylated in approximately 60% of the molecules isolated from erythrocytes.

It localises to the nucleus. It is found in the chromosome. Functionally, core component of nucleosome. Nucleosomes wrap and compact DNA into chromatin, limiting DNA accessibility to the cellular machineries which require DNA as a template. Histones thereby play a central role in transcription regulation, DNA repair, DNA replication and chromosomal stability. DNA accessibility is regulated via a complex set of post-translational modifications of histones, also called histone code, and nucleosome remodeling. This Sipunculus nudus (Sipunculan worm) protein is Histone H2A.